The chain runs to 672 residues: DNA mismatch repair protein MutL (672 aa).

Residues 443–454 (SYTSDSNQYENS) show a composition bias toward polar residues. The disordered stretch occupies residues 443–469 (SYTSDSNQYENSCKSDVDKESKSKTTG). The span at 455-465 (CKSDVDKESKS) shows a compositional bias: basic and acidic residues.

Belongs to the DNA mismatch repair MutL/HexB family.

In terms of biological role, this protein is involved in the repair of mismatches in DNA. It is required for dam-dependent methyl-directed DNA mismatch repair. May act as a 'molecular matchmaker', a protein that promotes the formation of a stable complex between two or more DNA-binding proteins in an ATP-dependent manner without itself being part of a final effector complex. This chain is DNA mismatch repair protein MutL, found in Clostridium botulinum (strain Eklund 17B / Type B).